The chain runs to 457 residues: Paired box protein Pax-8 (457 aa).

Positions 9–135 (GHGGLNQLGG…SSINRIIRTK (127 aa)) form a DNA-binding region, paired. A PAI subdomain region spans residues 12–68 (GLNQLGGAFVNGRPLPEVVRQRIVDLAHQGVRPCDISRQLRVSHGCVSKILGRYYET). The tract at residues 87–135 (KVVEKIGDYKRQNPTMFAWEIRDRLLAEGVCDNDTVPSVSSINRIIRTK) is RED subdomain. A compositionally biased stretch (polar residues) spans 159–182 (LIPSSAVTPPESPQSDSLGSTYSI). Residues 159–226 (LIPSSAVTPP…SSGPRKHLRT (68 aa)) form a disordered region. Ser-304 bears the Phosphoserine mark.

As to quaternary structure, interacts with WWTR1.

The protein resides in the nucleus. Functionally, thought to encode a transcription factor. It may have a role in kidney cell differentiation. May play a regulatory role in mammalian development. This is Paired box protein Pax-8 (Pax8) from Rattus norvegicus (Rat).